Reading from the N-terminus, the 119-residue chain is MVKLAFPRELRLLTPSQFTFVFQQPQRAGTPQITILGRLNSLGHPRIGLTVAKKNVRRAHERNRIKRLTRESFRLRQHELPAMDFVVVAKKGVADLDNRALSEALEKLWRRHCRLARGP.

This sequence belongs to the RnpA family. As to quaternary structure, consists of a catalytic RNA component (M1 or rnpB) and a protein subunit.

The catalysed reaction is Endonucleolytic cleavage of RNA, removing 5'-extranucleotides from tRNA precursor.. In terms of biological role, RNaseP catalyzes the removal of the 5'-leader sequence from pre-tRNA to produce the mature 5'-terminus. It can also cleave other RNA substrates such as 4.5S RNA. The protein component plays an auxiliary but essential role in vivo by binding to the 5'-leader sequence and broadening the substrate specificity of the ribozyme. This Escherichia coli O6:H1 (strain CFT073 / ATCC 700928 / UPEC) protein is Ribonuclease P protein component.